The sequence spans 324 residues: Lactonase drp35 (324 aa).

E47, S109, G111, D129, T132, Y134, D137, N184, D235, and S236 together coordinate Ca(2+). D235 functions as the Proton donor in the catalytic mechanism.

The protein belongs to the SMP-30/CGR1 family. Ca(2+) serves as cofactor.

Its subcellular location is the cytoplasm. In terms of biological role, exhibits lactonase activity. Acts in cells with perturbed membrane integrity and is possibly related to the membrane homeostasis. The polypeptide is Lactonase drp35 (drp35) (Staphylococcus aureus (strain USA300)).